The chain runs to 647 residues: MINITFPDGAIREFESGVTTFEIAQSISNSLAKKALAGKFNGKLIDTTRAITEDGSIEIVTPDHEDALPILRHSAAHLFAQAARRLFPDIHLGVGPAIEDGFYYDTDNTAGQISNEDLPRIEEEMQKIVKENFPSIREEVTKDEAREIFKNDPYKLELIEEHSEDEGGLTIYRQGEYVDLCRGPHVPSTGRIQIFHLLHVAGAYWRGNSDNAMMQRIYGTAWFDKKDLKNYLQMREEAKERDHRKLGKELDLFMISQEVGQGLPFWLPNGATIRRELERYIVNKELASGYQHVYTPPLASVELYKTSGHWDHYQEDMFPTMDMGDGEEFVLRPMNCPHHIQVFKHHVHSYRELPIRIAEIGMMHRYEKSGALTGLQRVREMSLNDGHLFVTPEQIQEEFQRALQLIIDVYEDFNLTDYRFRLSLRDPQDTHKYFDNDEMWENAQTMLRAALDEMGVDYFEAEGEAAFYGPKLDIQIKTALGKEETLSTIQLDFLLPERFDLKYIGADGEDHRPVMIHRGVISTMERFTAILIENYKGAFPTWLAPHQVTLIPVSNEKHVDYAWEVAKKLRDRGVRADVDERNEKMQFKIRASQTSKIPYQLIVGDKEMEDETVNVRRYGQKETQTVSVDNFVQAILADIANKSRVEK.

One can recognise a TGS domain in the interval 1-61 (MINITFPDGA…TEDGSIEIVT (61 aa)). The interval 242 to 540 (DHRKLGKELD…LIENYKGAFP (299 aa)) is catalytic. Residues Cys-336, His-387, and His-517 each contribute to the Zn(2+) site.

This sequence belongs to the class-II aminoacyl-tRNA synthetase family. As to quaternary structure, homodimer. Zn(2+) serves as cofactor.

The protein localises to the cytoplasm. It catalyses the reaction tRNA(Thr) + L-threonine + ATP = L-threonyl-tRNA(Thr) + AMP + diphosphate + H(+). Its function is as follows. Catalyzes the attachment of threonine to tRNA(Thr) in a two-step reaction: L-threonine is first activated by ATP to form Thr-AMP and then transferred to the acceptor end of tRNA(Thr). Also edits incorrectly charged L-seryl-tRNA(Thr). In Streptococcus pneumoniae serotype 19F (strain G54), this protein is Threonine--tRNA ligase.